A 368-amino-acid chain; its full sequence is 4-hydroxy-3-methylbut-2-en-1-yl diphosphate synthase (flavodoxin) (368 aa).

Cysteine 271, cysteine 274, cysteine 306, and glutamate 313 together coordinate [4Fe-4S] cluster.

It belongs to the IspG family. The cofactor is [4Fe-4S] cluster.

The enzyme catalyses (2E)-4-hydroxy-3-methylbut-2-enyl diphosphate + oxidized [flavodoxin] + H2O + 2 H(+) = 2-C-methyl-D-erythritol 2,4-cyclic diphosphate + reduced [flavodoxin]. Its pathway is isoprenoid biosynthesis; isopentenyl diphosphate biosynthesis via DXP pathway; isopentenyl diphosphate from 1-deoxy-D-xylulose 5-phosphate: step 5/6. Functionally, converts 2C-methyl-D-erythritol 2,4-cyclodiphosphate (ME-2,4cPP) into 1-hydroxy-2-methyl-2-(E)-butenyl 4-diphosphate. The chain is 4-hydroxy-3-methylbut-2-en-1-yl diphosphate synthase (flavodoxin) from Mannheimia succiniciproducens (strain KCTC 0769BP / MBEL55E).